Here is a 631-residue protein sequence, read N- to C-terminus: Chaperone protein DnaK (631 aa).

Residue T197 is modified to Phosphothreonine; by autocatalysis. Residues 598–631 are disordered; that stretch reads MYKKEQGQTGGTEQGGTEQKKSGGDDDVIDAEVE. A compositionally biased stretch (acidic residues) spans 622 to 631; that stretch reads DDDVIDAEVE.

This sequence belongs to the heat shock protein 70 family.

Functionally, acts as a chaperone. The polypeptide is Chaperone protein DnaK (Nitratiruptor sp. (strain SB155-2)).